The sequence spans 465 residues: Na(+)-translocating NADH-quinone reductase subunit A (465 aa).

It belongs to the NqrA family. In terms of assembly, composed of six subunits; NqrA, NqrB, NqrC, NqrD, NqrE and NqrF.

The enzyme catalyses a ubiquinone + n Na(+)(in) + NADH + H(+) = a ubiquinol + n Na(+)(out) + NAD(+). In terms of biological role, NQR complex catalyzes the reduction of ubiquinone-1 to ubiquinol by two successive reactions, coupled with the transport of Na(+) ions from the cytoplasm to the periplasm. NqrA to NqrE are probably involved in the second step, the conversion of ubisemiquinone to ubiquinol. The polypeptide is Na(+)-translocating NADH-quinone reductase subunit A (Chlamydia trachomatis serovar L2 (strain ATCC VR-902B / DSM 19102 / 434/Bu)).